A 220-amino-acid chain; its full sequence is Adenylate kinase (220 aa).

10–15 (GSGKST) is a binding site for ATP. The NMP stretch occupies residues 30–59 (SSGDIIRAEISSRTPLGLEMEKYLSRGDLI). Residues Ser-31, Arg-36, 57-59 (DLI), 83-86 (GYPR), and Gln-90 each bind AMP. Residues 124-161 (GRRICSKCGAVYHIEFNPPKIPGKCDICGGDLIQRPDD) form an LID region. Arg-125 contacts ATP. 2 residues coordinate Zn(2+): Cys-128 and Cys-131. 134 to 135 (VY) lines the ATP pocket. The Zn(2+) site is built by Cys-148 and Cys-151. Residues Arg-158 and Arg-169 each contribute to the AMP site. Gly-197 is an ATP binding site.

It belongs to the adenylate kinase family. Monomer.

The protein resides in the cytoplasm. The enzyme catalyses AMP + ATP = 2 ADP. The protein operates within purine metabolism; AMP biosynthesis via salvage pathway; AMP from ADP: step 1/1. In terms of biological role, catalyzes the reversible transfer of the terminal phosphate group between ATP and AMP. Plays an important role in cellular energy homeostasis and in adenine nucleotide metabolism. This chain is Adenylate kinase, found in Pyrococcus horikoshii (strain ATCC 700860 / DSM 12428 / JCM 9974 / NBRC 100139 / OT-3).